The following is a 393-amino-acid chain: tRNA(Met) cytidine acetate ligase (393 aa).

ATP is bound by residues G81, N142, and R167.

This sequence belongs to the TmcAL family.

The protein localises to the cytoplasm. The catalysed reaction is cytidine(34) in elongator tRNA(Met) + acetate + ATP = N(4)-acetylcytidine(34) in elongator tRNA(Met) + AMP + diphosphate. Catalyzes the formation of N(4)-acetylcytidine (ac(4)C) at the wobble position of elongator tRNA(Met), using acetate and ATP as substrates. First activates an acetate ion to form acetyladenylate (Ac-AMP) and then transfers the acetyl group to tRNA to form ac(4)C34. The protein is tRNA(Met) cytidine acetate ligase of Bacillus cytotoxicus (strain DSM 22905 / CIP 110041 / 391-98 / NVH 391-98).